The following is a 628-amino-acid chain: Glutamyl-tRNA(Gln) amidotransferase subunit E (628 aa).

It belongs to the GatB/GatE family. GatE subfamily. In terms of assembly, heterodimer of GatD and GatE.

It carries out the reaction L-glutamyl-tRNA(Gln) + L-glutamine + ATP + H2O = L-glutaminyl-tRNA(Gln) + L-glutamate + ADP + phosphate + H(+). Functionally, allows the formation of correctly charged Gln-tRNA(Gln) through the transamidation of misacylated Glu-tRNA(Gln) in organisms which lack glutaminyl-tRNA synthetase. The reaction takes place in the presence of glutamine and ATP through an activated gamma-phospho-Glu-tRNA(Gln). The GatDE system is specific for glutamate and does not act on aspartate. This Pyrococcus furiosus (strain ATCC 43587 / DSM 3638 / JCM 8422 / Vc1) protein is Glutamyl-tRNA(Gln) amidotransferase subunit E.